Consider the following 257-residue polypeptide: Achaete-scute complex protein T3 (257 aa).

One can recognise a bHLH domain in the interval 83–145; that stretch reads PSVARRNARE…RIAVEYIRGL (63 aa). A disordered region spans residues 161-221; sequence YNSADESSND…SEISGGGYIK (61 aa). 2 stretches are compositionally biased toward low complexity: residues 165–184 and 193–213; these read DESS…LDSS and QSAQ…SGSE.

Efficient DNA binding requires dimerization with another bHLH protein. As to expression, l(1)SC, SC and AC strongly label the presumptive stomatogastric nervous system, while ASE is more prominent in the presumptive procephalic lobe.

Its function is as follows. AS-C proteins are involved in the determination of the neuronal precursors in the peripheral nervous system and the central nervous system. The chain is Achaete-scute complex protein T3 (l(1)sc) from Drosophila melanogaster (Fruit fly).